A 591-amino-acid polypeptide reads, in one-letter code: L-fucose isomerase (591 aa).

Residues E337 and D361 each act as proton acceptor in the active site. E337, D361, and H528 together coordinate Mn(2+).

It belongs to the L-fucose isomerase family. Homohexamer. Mn(2+) is required as a cofactor.

It is found in the cytoplasm. It catalyses the reaction L-fucose = L-fuculose. It functions in the pathway carbohydrate degradation; L-fucose degradation; L-lactaldehyde and glycerone phosphate from L-fucose: step 1/3. Functionally, converts the aldose L-fucose into the corresponding ketose L-fuculose. The sequence is that of L-fucose isomerase from Salmonella paratyphi A (strain ATCC 9150 / SARB42).